A 216-amino-acid chain; its full sequence is Protein Syd (216 aa).

It belongs to the Syd family.

It is found in the cell inner membrane. In terms of biological role, interacts with the SecY protein in vivo. May bind preferentially to an uncomplexed state of SecY, thus functioning either as a chelating agent for excess SecY in the cell or as a regulatory factor that negatively controls the translocase function. This chain is Protein Syd, found in Shewanella baltica (strain OS155 / ATCC BAA-1091).